A 450-amino-acid chain; its full sequence is Phosphoglucosamine mutase (450 aa).

Residue Ser101 is the Phosphoserine intermediate of the active site. 4 residues coordinate Mg(2+): Ser101, Asp243, Asp245, and Asp247. Position 101 is a phosphoserine (Ser101).

It belongs to the phosphohexose mutase family. Mg(2+) is required as a cofactor. In terms of processing, activated by phosphorylation.

It catalyses the reaction alpha-D-glucosamine 1-phosphate = D-glucosamine 6-phosphate. In terms of biological role, catalyzes the conversion of glucosamine-6-phosphate to glucosamine-1-phosphate. This Desulfotalea psychrophila (strain LSv54 / DSM 12343) protein is Phosphoglucosamine mutase.